The following is a 148-amino-acid chain: Large ribosomal subunit protein uL15 (148 aa).

Residues 1 to 61 (MKINDLKPAP…GGQMPLQRRV (61 aa)) form a disordered region.

This sequence belongs to the universal ribosomal protein uL15 family. In terms of assembly, part of the 50S ribosomal subunit.

Functionally, binds to the 23S rRNA. In Thermodesulfovibrio yellowstonii (strain ATCC 51303 / DSM 11347 / YP87), this protein is Large ribosomal subunit protein uL15.